The chain runs to 291 residues: ATP synthase gamma chain (291 aa).

This sequence belongs to the ATPase gamma chain family. As to quaternary structure, F-type ATPases have 2 components, CF(1) - the catalytic core - and CF(0) - the membrane proton channel. CF(1) has five subunits: alpha(3), beta(3), gamma(1), delta(1), epsilon(1). CF(0) has three main subunits: a, b and c.

Its subcellular location is the cell inner membrane. Functionally, produces ATP from ADP in the presence of a proton gradient across the membrane. The gamma chain is believed to be important in regulating ATPase activity and the flow of protons through the CF(0) complex. This chain is ATP synthase gamma chain, found in Burkholderia ambifaria (strain MC40-6).